We begin with the raw amino-acid sequence, 324 residues long: Putative transcription factor sel-7 (324 aa).

Polar residues predominate over residues 67 to 85 (SPPQTVISEAPPQSFTPSA). The segment at 67–151 (SPPQTVISEA…DEKVLADGPF (85 aa)) is disordered. The segment covering 86–98 (TNSTSDKTSSSLK) has biased composition (low complexity). The span at 106-123 (SDGDLDMEGEEDTEELFD) shows a compositional bias: acidic residues. Residues 124–133 (NESQPSQRNQ) show a composition bias toward polar residues. Residues 134–146 (SPKETEVEDEKVL) are compositionally biased toward basic and acidic residues.

Multimer. May interact with mediator complex subunit mdt-29. Widely expressed, including in pharyngeal muscle cells and body wall muscle cells.

It is found in the nucleus. In terms of biological role, putative transcription factor. Positive regulator of the lin-12/Notch signaling pathway. Binds to specific DNA sequences in regulatory elements. Involved in cell fate decisions that require cell-cell interactions, such as the anchor cell (AC) / ventral uterine (VU) precursor cell fate decision. Heterochronic protein which controls the choice of stage specific cell fates, including the larval L3 stage-specific fate of seam cells. Involved in regulating the temporal expression pattern of hunchback-like protein hbl-1, thereby playing a role in the progression between larval stages L2 and L3. In Caenorhabditis elegans, this protein is Putative transcription factor sel-7.